The sequence spans 361 residues: Peptide chain release factor 1 (361 aa).

The residue at position 236 (Gln-236) is an N5-methylglutamine. The segment covering 285–309 has biased composition (basic and acidic residues); that stretch reads TAKDSARAADRKAQVGSGDRSERIR. Residues 285–311 form a disordered region; that stretch reads TAKDSARAADRKAQVGSGDRSERIRTY.

Belongs to the prokaryotic/mitochondrial release factor family. Post-translationally, methylated by PrmC. Methylation increases the termination efficiency of RF1.

Its subcellular location is the cytoplasm. Functionally, peptide chain release factor 1 directs the termination of translation in response to the peptide chain termination codons UAG and UAA. This chain is Peptide chain release factor 1, found in Methylorubrum extorquens (strain CM4 / NCIMB 13688) (Methylobacterium extorquens).